Here is a 550-residue protein sequence, read N- to C-terminus: Glucose-6-phosphate isomerase (550 aa).

Residue E356 is the Proton donor of the active site. Residues H387 and K515 contribute to the active site.

It belongs to the GPI family.

The protein resides in the cytoplasm. It carries out the reaction alpha-D-glucose 6-phosphate = beta-D-fructose 6-phosphate. It participates in carbohydrate biosynthesis; gluconeogenesis. The protein operates within carbohydrate degradation; glycolysis; D-glyceraldehyde 3-phosphate and glycerone phosphate from D-glucose: step 2/4. Its function is as follows. Catalyzes the reversible isomerization of glucose-6-phosphate to fructose-6-phosphate. The chain is Glucose-6-phosphate isomerase from Vibrio vulnificus (strain YJ016).